Reading from the N-terminus, the 499-residue chain is Alpha-amylase 3 (499 aa).

Ca(2+) is bound by residues Asn127 and Asp183. The active-site Nucleophile is the Asp213. His217 is a Ca(2+) binding site. The active-site Proton donor is Glu248.

It belongs to the glycosyl hydrolase 13 family. In terms of assembly, monomer. It depends on Ca(2+) as a cofactor.

It is found in the cytoplasm. The enzyme catalyses Endohydrolysis of (1-&gt;4)-alpha-D-glucosidic linkages in polysaccharides containing three or more (1-&gt;4)-alpha-linked D-glucose units.. The chain is Alpha-amylase 3 (amyC) from Dictyoglomus thermophilum (strain ATCC 35947 / DSM 3960 / H-6-12).